The following is a 159-amino-acid chain: Neuroglobin-2 (159 aa).

Residues 3–151 (KLTEKDKELI…VVAAMSRGWA (149 aa)) enclose the Globin domain. Heme b contacts are provided by His66 and His98.

This sequence belongs to the globin family. In terms of assembly, monomer. Homodimers and homotetramers. Mainly monomeric but also detected as part of homodimers and homotetramers.

It localises to the cytoplasm. It is found in the cytosol. The protein resides in the mitochondrion matrix. It catalyses the reaction Fe(III)-heme b-[protein] + nitric oxide + H2O = Fe(II)-heme b-[protein] + nitrite + 2 H(+). In terms of biological role, monomeric globin with a bis-histidyl six-coordinate heme-iron atom through which it can bind dioxygen, carbon monoxide and nitric oxide. Could help transport oxygen and increase its availability to the metabolically active neuronal tissues, though its low quantity in tissues as well as its high affinity for dioxygen, which may limit its oxygen-releasing ability, argue against it. The ferrous/deoxygenated form exhibits a nitrite reductase activity and it could produce nitric oxide which in turn inhibits cellular respiration in response to hypoxia. In its ferrous/deoxygenated state, it may also exhibit GDI (Guanine nucleotide Dissociation Inhibitor) activity toward heterotrimeric G-alpha proteins, thereby regulating signal transduction to facilitate neuroprotective responses in the wake of hypoxia and associated oxidative stress. In Oncorhynchus mykiss (Rainbow trout), this protein is Neuroglobin-2 (ngb2).